We begin with the raw amino-acid sequence, 140 residues long: Type II secretion system core protein G (140 aa).

A propeptide spans 1–6 (leader sequence); it reads MQRQRG. Phe7 bears the N-methylphenylalanine mark. The chain crosses the membrane as a helical span at residues 7 to 27; that stretch reads FTLLEIMVVIVILGVLASLVV. The interval 120–140 is disordered; the sequence is LGPDGVPESNDDIGNWTIGKK.

It belongs to the GSP G family. As to quaternary structure, type II secretion system is composed of four main components: the outer membrane complex, the inner membrane complex, the cytoplasmic secretion ATPase and the periplasm-spanning pseudopilus. Forms homomultimers. In terms of processing, cleaved by the prepilin peptidase. Post-translationally, methylated by prepilin peptidase at the amino group of the N-terminal phenylalanine once the leader sequence is cleaved.

The protein resides in the cell inner membrane. Core component of the type II secretion system required for the energy-dependent secretion of extracellular factors such as proteases and toxins from the periplasm. Pseudopilin (pilin-like) protein that polymerizes to form the pseudopilus. Further polymerization triggers pseudopilus growth. The chain is Type II secretion system core protein G (pulG) from Klebsiella pneumoniae.